The chain runs to 726 residues: Procollagen-lysine,2-oxoglutarate 5-dioxygenase 1 (726 aa).

A signal peptide spans 1–18; that stretch reads MRLLLLLAPLGWLLLAET. N-linked (GlcNAc...) asparagine glycosylation is found at asparagine 196 and asparagine 537. The 92-residue stretch at 635–726 folds into the Fe2OG dioxygenase domain; the sequence is QFDLAFVVRY…RYIAVSFVDP (92 aa). Residues histidine 655 and aspartate 657 each contribute to the Fe cation site. The N-linked (GlcNAc...) asparagine glycan is linked to asparagine 685. Histidine 707 serves as a coordination point for Fe cation. Arginine 717 is a catalytic residue.

In terms of assembly, homodimer. Identified in a complex with P3H3 and P3H4. The cofactor is Fe(2+). It depends on L-ascorbate as a cofactor.

It is found in the rough endoplasmic reticulum membrane. It carries out the reaction L-lysyl-[collagen] + 2-oxoglutarate + O2 = (5R)-5-hydroxy-L-lysyl-[collagen] + succinate + CO2. Part of a complex composed of PLOD1, P3H3 and P3H4 that catalyzes hydroxylation of lysine residues in collagen alpha chains and is required for normal assembly and cross-linkling of collagen fibrils. Forms hydroxylysine residues in -Xaa-Lys-Gly- sequences in collagens. These hydroxylysines serve as sites of attachment for carbohydrate units and are essential for the stability of the intermolecular collagen cross-links. This chain is Procollagen-lysine,2-oxoglutarate 5-dioxygenase 1 (PLOD1), found in Bos taurus (Bovine).